We begin with the raw amino-acid sequence, 508 residues long: Anthranilate synthase component 1 (508 aa).

L-tryptophan-binding positions include S51 and 283 to 285 (PYM). Position 323–324 (323–324 (GT)) interacts with chorismate. E350 serves as a coordination point for Mg(2+). Chorismate is bound by residues Y438, R458, 477–479 (GAG), and G479. Residue E492 participates in Mg(2+) binding.

It belongs to the anthranilate synthase component I family. In terms of assembly, heterotetramer consisting of two non-identical subunits: a beta subunit (TrpG) and a large alpha subunit (TrpE). The cofactor is Mg(2+).

It carries out the reaction chorismate + L-glutamine = anthranilate + pyruvate + L-glutamate + H(+). The protein operates within amino-acid biosynthesis; L-tryptophan biosynthesis; L-tryptophan from chorismate: step 1/5. Feedback inhibited by tryptophan. In terms of biological role, part of a heterotetrameric complex that catalyzes the two-step biosynthesis of anthranilate, an intermediate in the biosynthesis of L-tryptophan. In the first step, the glutamine-binding beta subunit (TrpG) of anthranilate synthase (AS) provides the glutamine amidotransferase activity which generates ammonia as a substrate that, along with chorismate, is used in the second step, catalyzed by the large alpha subunit of AS (TrpE) to produce anthranilate. In the absence of TrpG, TrpE can synthesize anthranilate directly from chorismate and high concentrations of ammonia. In Synechocystis sp. (strain ATCC 27184 / PCC 6803 / Kazusa), this protein is Anthranilate synthase component 1 (trpE).